A 304-amino-acid polypeptide reads, in one-letter code: Galactose 1-dehydrogenase (304 aa).

The protein belongs to the Gfo/Idh/MocA family. Homodimer.

It localises to the cytoplasm. It carries out the reaction D-galactose + NAD(+) = D-galactono-1,4-lactone + NADH + H(+). It participates in carbohydrate metabolism; galactose metabolism. Functionally, catalyzes the dehydrogenation of D-galactose by either NAD(+) or NADP(+). Oxidizes following sugars in decreasing order: D-fucose &gt; D-galactose &gt; L-arabinose &gt; 2-deoxy-D-galactose &gt;&gt; 4-deoxy-D-galactose &gt; 2-deoxy-2-amino-D-galactose. The sequence is that of Galactose 1-dehydrogenase (gal) from Pseudomonas fluorescens.